Consider the following 281-residue polypeptide: 2-dehydro-3-deoxyphosphooctonate aldolase 1 (281 aa).

This sequence belongs to the KdsA family.

The protein resides in the cytoplasm. The enzyme catalyses D-arabinose 5-phosphate + phosphoenolpyruvate + H2O = 3-deoxy-alpha-D-manno-2-octulosonate-8-phosphate + phosphate. Its pathway is carbohydrate biosynthesis; 3-deoxy-D-manno-octulosonate biosynthesis; 3-deoxy-D-manno-octulosonate from D-ribulose 5-phosphate: step 2/3. The protein operates within bacterial outer membrane biogenesis; lipopolysaccharide biosynthesis. The sequence is that of 2-dehydro-3-deoxyphosphooctonate aldolase 1 (kdsA1) from Pseudomonas putida (strain ATCC 47054 / DSM 6125 / CFBP 8728 / NCIMB 11950 / KT2440).